Reading from the N-terminus, the 430-residue chain is Peptidoglycan DD-endopeptidase ShyA (430 aa).

An N-terminal signal peptide occupies residues 1–35; that stretch reads MISKSIILRFSELSMRKKATLVGLPLLAVAAISSS. Zn(2+) contacts are provided by histidine 297, aspartate 301, and histidine 378.

This sequence belongs to the peptidase M23B family. It depends on Zn(2+) as a cofactor.

It localises to the periplasm. It participates in cell wall degradation; peptidoglycan degradation. Its activity is regulated as follows. Reduced activity in 0.5 mM EDTA and a complete loss of activity at higher EDTA concentrations. The effect of EDTA can be reversed by addition of 1 mM ZnCl(2). Conformational switching between open (catalytically active) and closed (catalytically inactive) conformation of this protein is suggested mechanism of its regulation. The signal or inducer of the conformational shift to the open form unmasking the active site is currently not understood. Its function is as follows. Cell wall peptidoglycan (PG) DD-endopeptidase essential for cell growth and elongation. Hydrolyzes peptide cross-links which covalently connect adjacent PG strands probably to allow insertion of new glycans and thus cell wall expansion. Degrades purified whole PG sacculi in vitro. Releases predominantly short glycan chains from the PG. Cleaves D,D cross-linked muropeptides specifically preferring dimeric tetrapeptide-tetrapeptide (D44) substrates and has only little activity on dimeric tetrapeptide-pentapeptide (D45) substrates. Also converts more than 50% of tetrapeptide-tripeptide (D43) to product as well as more than 50% of D43M, which contains D-Met instead of D-Ala in the fourth position of the acceptor moiety. Cleaves the D,D bond between diaminopimelic acid (DAP) and D-Ala of the PG substrate in vitro. No cleavage of L,D bond connecting two DAP moieties. This chain is Peptidoglycan DD-endopeptidase ShyA, found in Vibrio cholerae serotype O1 (strain ATCC 39315 / El Tor Inaba N16961).